The following is a 352-amino-acid chain: D-alanine--D-alanine ligase (352 aa).

Residues 133 to 342 (KTVFAAAGLP…FPKLVDRLIQ (210 aa)) enclose the ATP-grasp domain. ATP is bound at residue 169 to 224 (DETIGYPNFVKPANLGSSVGISKVRSRLELEAALDSAASFDRRIVVEAGVVAREVE). Residues aspartate 295, glutamate 309, and asparagine 311 each coordinate Mg(2+).

Belongs to the D-alanine--D-alanine ligase family. Mg(2+) serves as cofactor. Mn(2+) is required as a cofactor.

Its subcellular location is the cytoplasm. It carries out the reaction 2 D-alanine + ATP = D-alanyl-D-alanine + ADP + phosphate + H(+). The protein operates within cell wall biogenesis; peptidoglycan biosynthesis. Functionally, cell wall formation. This chain is D-alanine--D-alanine ligase, found in Acaryochloris marina (strain MBIC 11017).